The sequence spans 430 residues: UDP-N-acetylglucosamine 1-carboxyvinyltransferase (430 aa).

K22–N23 is a binding site for phosphoenolpyruvate. A UDP-N-acetyl-alpha-D-glucosamine-binding site is contributed by R102. Catalysis depends on C126, which acts as the Proton donor. 2-(S-cysteinyl)pyruvic acid O-phosphothioketal is present on C126. UDP-N-acetyl-alpha-D-glucosamine contacts are provided by residues R131–L135, K172–V175, D317, and I339.

The protein belongs to the EPSP synthase family. MurA subfamily.

The protein localises to the cytoplasm. The catalysed reaction is phosphoenolpyruvate + UDP-N-acetyl-alpha-D-glucosamine = UDP-N-acetyl-3-O-(1-carboxyvinyl)-alpha-D-glucosamine + phosphate. It participates in cell wall biogenesis; peptidoglycan biosynthesis. Its function is as follows. Cell wall formation. Adds enolpyruvyl to UDP-N-acetylglucosamine. The polypeptide is UDP-N-acetylglucosamine 1-carboxyvinyltransferase (Rhizobium etli (strain CIAT 652)).